A 396-amino-acid polypeptide reads, in one-letter code: S-adenosylmethionine synthase (396 aa).

Residue His-16 participates in ATP binding. Residue Asp-18 coordinates Mg(2+). K(+) is bound at residue Glu-44. Positions 57 and 100 each coordinate L-methionine. The interval Gln-100–Arg-110 is flexible loop. ATP is bound by residues Asp-165 to Lys-167, Lys-231 to Phe-232, Asp-240, Arg-246 to Lys-247, Ala-263, and Lys-267. L-methionine is bound at residue Asp-240. Lys-271 is an L-methionine binding site.

The protein belongs to the AdoMet synthase family. In terms of assembly, homotetramer; dimer of dimers. It depends on Mg(2+) as a cofactor. K(+) is required as a cofactor.

The protein resides in the cytoplasm. The catalysed reaction is L-methionine + ATP + H2O = S-adenosyl-L-methionine + phosphate + diphosphate. It participates in amino-acid biosynthesis; S-adenosyl-L-methionine biosynthesis; S-adenosyl-L-methionine from L-methionine: step 1/1. Catalyzes the formation of S-adenosylmethionine (AdoMet) from methionine and ATP. The overall synthetic reaction is composed of two sequential steps, AdoMet formation and the subsequent tripolyphosphate hydrolysis which occurs prior to release of AdoMet from the enzyme. The protein is S-adenosylmethionine synthase of Azotobacter vinelandii (strain DJ / ATCC BAA-1303).